The following is a 1012-amino-acid chain: DNA polymerase catalytic subunit (1012 aa).

The segment at 1–31 is disordered; that stretch reads MDFFNPFIDPTRGGPRNTVRQPTPSQSPTVP. The segment covering 21 to 31 has biased composition (low complexity); that stretch reads QPTPSQSPTVP.

Belongs to the DNA polymerase type-B family. Forms a complex with the ssDNA-binding protein, the DNA polymerase processivity factor, and the alkaline exonuclease. Interacts with the putative helicase-primase complex subunit; this interaction may coordinate leading and lagging strand DNA synthesis at the replication fork.

The protein localises to the host nucleus. The enzyme catalyses DNA(n) + a 2'-deoxyribonucleoside 5'-triphosphate = DNA(n+1) + diphosphate. It carries out the reaction Endonucleolytic cleavage to 5'-phosphomonoester.. Functionally, replicates viral genomic DNA. The replication complex is composed of six viral proteins: the DNA polymerase, processivity factor, primase, primase-associated factor, helicase, and ssDNA-binding protein. Additionally, the polymerase contains an intrinsic ribonuclease H (RNase H) activity that specifically degrades RNA/DNA heteroduplexes or duplex DNA substrates in the 5' to 3' direction. Therefore, it can catalyze the excision of the RNA primers that initiate the synthesis of Okazaki fragments at a replication fork during viral DNA replication. The chain is DNA polymerase catalytic subunit (ORF9) from Human herpesvirus 8 type P (isolate GK18) (HHV-8).